The sequence spans 342 residues: Nucleoid-associated protein Shewmr7_2293 (342 aa).

This sequence belongs to the YejK family.

The protein resides in the cytoplasm. The protein localises to the nucleoid. This Shewanella sp. (strain MR-7) protein is Nucleoid-associated protein Shewmr7_2293.